A 263-amino-acid chain; its full sequence is Fructose-bisphosphate aldolase class 1 (263 aa).

K177 serves as the catalytic Schiff-base intermediate with dihydroxyacetone-P.

Belongs to the DeoC/FbaB aldolase family.

It carries out the reaction beta-D-fructose 1,6-bisphosphate = D-glyceraldehyde 3-phosphate + dihydroxyacetone phosphate. Its function is as follows. Has aldolase activity with fructose 1,6-bisphosphate. May play a role in the biosynthesis of aromatic amino acids (AroAA). The sequence is that of Fructose-bisphosphate aldolase class 1 (fba1) from Halobacterium salinarum (strain ATCC 29341 / DSM 671 / R1).